The sequence spans 364 residues: DNA replication and repair protein RecF (364 aa).

30 to 37 (GDNAQGKT) contributes to the ATP binding site.

It belongs to the RecF family.

Its subcellular location is the cytoplasm. Its function is as follows. The RecF protein is involved in DNA metabolism; it is required for DNA replication and normal SOS inducibility. RecF binds preferentially to single-stranded, linear DNA. It also seems to bind ATP. This Clostridium kluyveri (strain ATCC 8527 / DSM 555 / NBRC 12016 / NCIMB 10680 / K1) protein is DNA replication and repair protein RecF.